Consider the following 105-residue polypeptide: Small ribosomal subunit protein uS10 (105 aa).

It belongs to the universal ribosomal protein uS10 family. In terms of assembly, part of the 30S ribosomal subunit.

Its function is as follows. Involved in the binding of tRNA to the ribosomes. This Chlamydia abortus (strain DSM 27085 / S26/3) (Chlamydophila abortus) protein is Small ribosomal subunit protein uS10.